The sequence spans 267 residues: MKHVKAVIFDWAGTVVDYGSLAPMGAFVETFEQFGVSITIDEARGPMGMAKRPHIAALMALPRVAQAWADKYGHAPGEADIDAVYDVFVPKNIAVAASYSSVIPGVADVASALRSDDIRIGTTTGYTREIMAEIVPGAAAQGFSPDSIVCTGDTPEGRPSPYMIYKTLPELGVWRAKDAIKVDDTEVGIEEGINGGTWAVGVAVSGNAFGMAENDVKALAPHEFAWRRKAATEKLKAAGAHYVIDSVADLMPVVYDIEARLARGERP.

Asp-10 functions as the Nucleophile in the catalytic mechanism. Positions 10 and 12 each coordinate Mg(2+). Lys-51 acts as the Schiff-base intermediate with substrate in catalysis. Mg(2+) is bound at residue Asp-184.

This sequence belongs to the HAD-like hydrolase superfamily. PhnX family. As to quaternary structure, homodimer. The cofactor is Mg(2+).

The catalysed reaction is phosphonoacetaldehyde + H2O = acetaldehyde + phosphate + H(+). Involved in phosphonate degradation. The chain is Phosphonoacetaldehyde hydrolase from Paraburkholderia phytofirmans (strain DSM 17436 / LMG 22146 / PsJN) (Burkholderia phytofirmans).